The sequence spans 1125 residues: tRNA (34-2'-O)-methyltransferase regulator WDR6 (1125 aa).

N-acetylmethionine is present on Met1. WD repeat units lie at residues 53-97 (VKRV…VVKV), 105-143 (RELWRSGLWNMSDWIWDVRWIEGNVAVALGHNSVVLYDP), 147-189 (CMLQ…IWYP), 200-238 (APDRRVSGHVGVIFSMSYLESKGLLATASEDRSVRLWKV), 247-285 (RVQNIGHCFGHSARVWQVKLLENYLISAGEDCVCLVWSH), 289-327 (ILQAFRGHRGRGIRAIATHERQAWVVTGGDDSGIRLWHL), 335-376 (LGVS…LYDL), 381-422 (WEQL…VVPI), 425-470 (PTAA…ISAA), 476-520 (IFVK…LFPV), 559-598 (PVSTLHSLHGKQGVTSVTCHGGYLYSTGRDSSYFQLFVHG), 604-642 (VLRQKACRGMNWVAGLRMVPDGSMVILGFHANEFVVWSP), 645-684 (HEKLHIVNCGGGHRSWAFSDTEAAMAFTYLKDGEVMLYRA), 739-785 (LIDI…VWAV), 848-897 (RNKH…LFLL), 905-950 (HLLA…FWDL), 974-1016 (GTPS…VFTL), 1040-1077 (EEYSVPCAHAAHVTGVKILSPKLMVSASIDQRLTFWRL), and 1083-1125 (TFMN…NWYD).

The protein belongs to the WD repeat WDR6 family. In terms of assembly, interacts with FTSJ1; the interaction is direct, and required for 2'-O-methylation of position 34 in substrate tRNAs. Interacts with IRS4. Interacts with STK11/LKB1.

Its subcellular location is the cytoplasm. Functionally, together with methyltransferase FTSJ1, methylates the 2'-O-ribose of nucleotides at position 34 of the tRNA anticodon loop of substrate tRNAs. Required for the correct positioning of the substrate tRNA for methylation. Required to suppress amino acid starvation-induced autophagy. Enhances the STK11/LKB1-induced cell growth suppression activity. The polypeptide is tRNA (34-2'-O)-methyltransferase regulator WDR6 (Wdr6) (Mus musculus (Mouse)).